The primary structure comprises 187 residues: Signal peptidase complex catalytic subunit SEC11 (187 aa).

Over 1-18 (MLSSLSPYMANPRNTLSQ) the chain is Cytoplasmic. The helical; Signal-anchor for type II membrane protein transmembrane segment at 19-39 (VLNFGLVLSSAFMVWKALSVI) threads the bilayer. Residues 40–187 (TNSASPVVVV…MGLMVMLQRE (148 aa)) lie on the Lumenal side of the membrane. Active-site charge relay system residues include Ser53 and His92. The N-linked (GlcNAc...) asparagine glycan is linked to Asn125. The Charge relay system role is filled by Asp129. Positions 173-184 (VLLGFMGLMVML) are C-terminal short (CTS) helix.

It belongs to the peptidase S26B family. Component of the signal peptidase complex (SPC) composed of a catalytic subunit SEC11 and three accessory subunits SPC1, SPC2 and SPC3. The complex induces a local thinning of the ER membrane which is used to measure the length of the signal peptide (SP) h-region of protein substrates. This ensures the selectivity of the complex towards h-regions shorter than 18-20 amino acids. SPC associates with the translocon complex.

The protein localises to the endoplasmic reticulum membrane. The enzyme catalyses Cleavage of hydrophobic, N-terminal signal or leader sequences from secreted and periplasmic proteins.. Its function is as follows. Catalytic component of the signal peptidase complex (SPC) which catalyzes the cleavage of N-terminal signal sequences from nascent proteins as they are translocated into the lumen of the endoplasmic reticulum. Specifically cleaves N-terminal signal peptides that contain a hydrophobic alpha-helix (h-region) shorter than 18-20 amino acids. In Ajellomyces capsulatus (strain NAm1 / WU24) (Darling's disease fungus), this protein is Signal peptidase complex catalytic subunit SEC11 (SEC11).